A 150-amino-acid chain; its full sequence is Large ribosomal subunit protein bL9 (150 aa).

This sequence belongs to the bacterial ribosomal protein bL9 family.

In terms of biological role, binds to the 23S rRNA. The polypeptide is Large ribosomal subunit protein bL9 (Neisseria gonorrhoeae (strain ATCC 700825 / FA 1090)).